A 564-amino-acid polypeptide reads, in one-letter code: MRLSEFHLHTTKEIPADAELVSHRLMLRAGMIRKLASGLYTWSPLGLRVLRKVEAIVRDEMNRAGAVEMLLPTIQPRELWEESERWEKFGNQLLKIKDRKQAEYCYSPTAEEAVTDYVRQELTSYKQLPVNLYQIQTKFRDEIRPRFGVMRAREFVMKDAYSFHLNDADLVREYENMRATYTRIFTRLGLEFRAVQADSGAIGGDASQEFHVIADSGEDVLAFSTGSDYAANIEAAIAATPGPRLTANETLQKVSTPTQKRCEDVAALLDIPLQRVVKSIAVMTDSGFFLALLRGDHTLNDIKLSKLPGLANFRLANEVEIARHLGSEPGFLGPVCPGMPIRIIADCEVAVMADFVVGANEVGFHLVGVNWGRDLPEPEVVADIRNVIEGDRAVDGGKICIARGIEVGHVFQLGRKYAEAMKATVLDEYGKAVTMTMGCYGIGVSRIVAAAIEQNHDVAGIIWPASIAPWQVAVCVINPKKDPVITAAAEVLLAELQSADVDTVLDDRGLRPGVMFADMELIGIPHRIVVSERGLAAGTYEYRARHTAMVENLDKTTLLMRIKA.

Belongs to the class-II aminoacyl-tRNA synthetase family. ProS type 1 subfamily. As to quaternary structure, homodimer.

The protein localises to the cytoplasm. The enzyme catalyses tRNA(Pro) + L-proline + ATP = L-prolyl-tRNA(Pro) + AMP + diphosphate. Its function is as follows. Catalyzes the attachment of proline to tRNA(Pro) in a two-step reaction: proline is first activated by ATP to form Pro-AMP and then transferred to the acceptor end of tRNA(Pro). As ProRS can inadvertently accommodate and process non-cognate amino acids such as alanine and cysteine, to avoid such errors it has two additional distinct editing activities against alanine. One activity is designated as 'pretransfer' editing and involves the tRNA(Pro)-independent hydrolysis of activated Ala-AMP. The other activity is designated 'posttransfer' editing and involves deacylation of mischarged Ala-tRNA(Pro). The misacylated Cys-tRNA(Pro) is not edited by ProRS. This Xylella fastidiosa (strain 9a5c) protein is Proline--tRNA ligase.